A 439-amino-acid polypeptide reads, in one-letter code: uncharacterized protein (439 aa).

This is an uncharacterized protein from Caenorhabditis elegans.